Consider the following 238-residue polypeptide: Neuromodulin (238 aa).

Positions 1-238 are disordered; the sequence is MLCCMRRTKQ…EEPEADQEHA (238 aa). S-palmitoyl cysteine attachment occurs at residues cysteine 3 and cysteine 4. Residues 9-32 are compositionally biased toward basic and acidic residues; sequence KQVEKNDEDQKIEQDGIKPEDKAH. In terms of domain architecture, IQ spans 31–60; the sequence is AHKAATKIQASFRGHITRKKLKGEKKDDAQ. At serine 41 the chain carries Phosphoserine; by PHK and PKC. The segment covering 54–83 has biased composition (basic and acidic residues); sequence EKKDDAQAAEAEANKKDEAPVADGVEKKGE. Positions 84 to 95 are enriched in low complexity; it reads GTTATEAAPATG. Residues 97 to 116 show a composition bias toward basic and acidic residues; sequence KPDEPGKAGETPSEEKKGEG. The span at 119-130 shows a compositional bias: low complexity; it reads ATEQAAPQAPAS. Residues 139 to 154 show a composition bias toward polar residues; the sequence is ETESATKASTDNSPSS. A phosphoserine mark is found at serine 151, serine 153, and serine 154. Positions 155-167 are enriched in basic and acidic residues; that stretch reads KAEDAPAKEEPKQ. Low complexity predominate over residues 168–199; that stretch reads ADVPAAVTAAAATTPAAEDAAAKATAQPPTET. The residue at position 181 (threonine 181) is a Phosphothreonine. Phosphoserine; by CK2 is present on residues serine 202 and serine 203. The segment covering 213–225 has biased composition (basic and acidic residues); sequence DETKPKESARQDE. Residues 226-238 show a composition bias toward acidic residues; that stretch reads GKEEEPEADQEHA.

It belongs to the neuromodulin family. As to quaternary structure, identified in a complex containing FGFR4, NCAM1, CDH2, PLCG1, FRS2, SRC, SHC1, GAP43 and CTTN. Interacts (via IQ domain) with calmodulin. Binds calmodulin with a greater affinity in the absence of Ca(2+) than in its presence. In terms of processing, phosphorylated. Phosphorylation of this protein by a protein kinase C is specifically correlated with certain forms of synaptic plasticity. Post-translationally, palmitoylated by ZDHHC3. Palmitoylation is regulated by ARF6 and is essential for plasma membrane association and axonal and dendritic filopodia induction. Deacylated by LYPLA2.

The protein localises to the cell membrane. It is found in the cell projection. The protein resides in the growth cone membrane. It localises to the synapse. Its subcellular location is the filopodium membrane. The protein localises to the perikaryon. It is found in the dendrite. The protein resides in the axon. It localises to the cytoplasm. In terms of biological role, this protein is associated with nerve growth. It is a major component of the motile 'growth cones' that form the tips of elongating axons. Plays a role in axonal and dendritic filopodia induction. This chain is Neuromodulin (GAP43), found in Macaca fascicularis (Crab-eating macaque).